Consider the following 329-residue polypeptide: Malate dehydrogenase (329 aa).

12-18 contacts NAD(+); that stretch reads GAAGQIG. Substrate-binding residues include Arg-95 and Arg-101. NAD(+) is bound by residues Asn-108, Gln-115, and 132-134; that span reads VGN. Substrate-binding residues include Asn-134 and Arg-165. Residue His-190 is the Proton acceptor of the active site.

It belongs to the LDH/MDH superfamily. MDH type 2 family.

The enzyme catalyses (S)-malate + NAD(+) = oxaloacetate + NADH + H(+). Its function is as follows. Catalyzes the reversible oxidation of malate to oxaloacetate. This chain is Malate dehydrogenase, found in Bordetella bronchiseptica (strain ATCC BAA-588 / NCTC 13252 / RB50) (Alcaligenes bronchisepticus).